Here is a 563-residue protein sequence, read N- to C-terminus: Lipase 2 (563 aa).

Positions 1 to 19 (MVSKSLFLAAAVNLAGVLA) are cleaved as a signal peptide. Residue Gln20 is modified to Pyrrolidone carboxylic acid. A disulfide bridge connects residues Cys80 and Cys124. The Acyl-ester intermediate role is filled by Ser236. Cys295 and Cys307 are joined by a disulfide. An N-linked (GlcNAc...) asparagine glycan is attached at Asn302. Residue Glu373 is the Charge relay system of the active site. Asn383 carries N-linked (GlcNAc...) asparagine glycosylation. His482 serves as the catalytic Charge relay system.

This sequence belongs to the type-B carboxylesterase/lipase family. In terms of assembly, monomer.

It is found in the secreted. The enzyme catalyses a triacylglycerol + H2O = a diacylglycerol + a fatty acid + H(+). Functionally, hydrolyzes all ester bonds in triglyceride and displays a high affinity for triolein. For unsaturated substrates having long fatty acyl chains (C18:2 cis-9, cis-12 and C18:3 cis-9, cis-12, cis-15) GCL I shows higher specific activity than GCL II, whereas GCL II shows higher specific activity against saturated substrates having short fatty acid chains (C8, C10, C12 and C14). In Geotrichum candidum (Oospora lactis), this protein is Lipase 2 (LIP2).